Reading from the N-terminus, the 528-residue chain is Cytochrome b5 reductase 4 (528 aa).

N-acetylmethionine is present on methionine 1. The interval 1–29 is disordered; that stretch reads MLNVPSQAFPAPGSQQRVSSQGRSKVPLK. Positions 13-24 are enriched in low complexity; sequence GSQQRVSSQGRS. The Cytochrome b5 heme-binding domain occupies 54–130; that stretch reads LIEVTEEELK…LKECLVGRMA (77 aa). Heme contacts are provided by histidine 89 and histidine 112. The 92-residue stretch at 172–263 folds into the CS domain; that stretch reads LSSPSYDWFQ…KESVSWQCLG (92 aa). The 113-residue stretch at 280–392 folds into the FAD-binding FR-type domain; sequence LYYRRCQLIS…SGPEGDFKVS (113 aa). FAD is bound by residues 372–387 and 399–431; these read DRLQ…GPEG and DLFL…KVKL.

Belongs to the flavoprotein pyridine nucleotide cytochrome reductase family. FAD is required as a cofactor. In terms of tissue distribution, ubiquitously expressed. Isoform 2 is expressed in testis, brain, skeletal muscle and in the male germline.

The protein localises to the endoplasmic reticulum. The catalysed reaction is 2 Fe(III)-[cytochrome b5] + NADH = 2 Fe(II)-[cytochrome b5] + NAD(+) + H(+). Functionally, NADH-cytochrome b5 reductase involved in endoplasmic reticulum stress response pathway. Plays a critical role in protecting pancreatic beta-cells against oxidant stress, possibly by protecting the cell from excess buildup of reactive oxygen species (ROS). This Mus musculus (Mouse) protein is Cytochrome b5 reductase 4 (Cyb5r4).